The sequence spans 512 residues: MKYVGSIDQGTTSTRFIIFDERQRPVSVHQVPHTQHTPHPGWLEHDPMEIFRSACKCMSVAIAKLRQKDASFRKIEAIGITNQRETTVAWDRVTKEPLCYAPVWNDLRTYDITKKVTAELGGGDSMFASKITGLPVSTYFAAFKMRWMLENVPAVADACRRGTLCFGTIDTWLMYKLSGGKAFVTDVTNASRTFLMDLRTRKWSPELCEKLKIPMETLPEIRSNSELFGYVETDECGVAAALNERTPIMGSIGDQQSALFGNMCFEKGEAKNTYGTGCFLLMNVGEEARFSKHGLLSTVGFQVGRDGPCYYALEGAIACAGATVEWMRRNMNLFSHITECEKLARSVPGTQGIVFVPAFSGLLAPYWDPSARGTIVGMTLKTTRAHVIRAALQAIALQLNDVVGSMKRDAGLNLSSLRVDGGLSKNGLLMEIQASLLGVDILVPSMHETTALGAALCAGLAAGVWTSLEEVKAVSRRENSWKTVSPSGSAMEREAMIAEWREALKRTKWAKL.

Position 11 (threonine 11) interacts with substrate. Arginine 15 is an ATP binding site. Positions 84, 139, and 254 each coordinate substrate. ATP-binding positions include threonine 276, glycine 321, and 422–426 (GLSKN). The Microbody targeting signal motif lies at 510-512 (AKL).

Belongs to the FGGY kinase family.

It localises to the glycosome. It catalyses the reaction glycerol + ATP = sn-glycerol 3-phosphate + ADP + H(+). Its pathway is polyol metabolism; glycerol degradation via glycerol kinase pathway; sn-glycerol 3-phosphate from glycerol: step 1/1. In terms of biological role, catalyzes the phosphorylation of glycerol using ATP. Under anoxic conditions, when glycerol 3-phosphate accumulates in the glycosome, it catalyzes the reverse reaction, maintaining the ATP balance. Key enzyme for the survival of bloodstream forms under anoxic conditions. The protein is Glycerol kinase, glycosomal (GK) of Trypanosoma brucei brucei.